An 870-amino-acid chain; its full sequence is Leucine--tRNA ligase (870 aa).

Residues proline 42 to histidine 52 carry the 'HIGH' region motif. The short motif at lysine 629 to serine 633 is the 'KMSKS' region element. Residue lysine 632 coordinates ATP.

Belongs to the class-I aminoacyl-tRNA synthetase family.

It is found in the cytoplasm. The enzyme catalyses tRNA(Leu) + L-leucine + ATP = L-leucyl-tRNA(Leu) + AMP + diphosphate. In Ectopseudomonas mendocina (strain ymp) (Pseudomonas mendocina), this protein is Leucine--tRNA ligase.